We begin with the raw amino-acid sequence, 1030 residues long: LPS-assembly protein LptD (1030 aa).

Residues 1–32 form the signal peptide; that stretch reads MEGPPTAAHAAAPLRTAVFLALAASWQQPAVA. Positions 50 to 213 are disordered; sequence VAKRKDGGAD…APAGWTCKPQ (164 aa). Residues 78 to 91 are compositionally biased toward polar residues; the sequence is LSQSNRAAPSTAVS. A compositionally biased stretch (acidic residues) spans 126–137; the sequence is TEDEEDEESESA. A compositionally biased stretch (pro residues) spans 161-171; the sequence is GTPPARAPRPE.

This sequence belongs to the LptD family. Component of the lipopolysaccharide transport and assembly complex. Interacts with LptE and LptA.

It localises to the cell outer membrane. Its function is as follows. Together with LptE, is involved in the assembly of lipopolysaccharide (LPS) at the surface of the outer membrane. The polypeptide is LPS-assembly protein LptD (Methylococcus capsulatus (strain ATCC 33009 / NCIMB 11132 / Bath)).